The sequence spans 552 residues: Capsid protein precursor (552 aa).

Residues 1 to 41 are disordered; the sequence is MKQNDTKKTTQRRNSKKYSSKTNRGTKRAPRDQEVGTGAQE. A compositionally biased stretch (basic residues) spans 9–28; it reads TTQRRNSKKYSSKTNRGTKR.

Homodimer. Post-translationally, the 7 kDa polypeptide is acetylated. In terms of processing, autocatalytic proteolysis releases a post-translationally modified peptide that remains associated with nucleic acid within the virion. This peptide is observed only when nucleic acid is packaged in the capsid.

The protein localises to the virion. Functionally, the capsid protein self-assembles to form an icosahedral capsid with a T=2 symmetry made of 120 subunits. In Human picobirnavirus (strain Human/Thailand/Hy005102/-) (PBV), this protein is Capsid protein precursor (Segment-1).